The following is a 105-amino-acid chain: Heat shock protein HspQ (105 aa).

This sequence belongs to the HspQ family.

It localises to the cytoplasm. Involved in the degradation of certain denaturated proteins, including DnaA, during heat shock stress. This chain is Heat shock protein HspQ, found in Salmonella choleraesuis (strain SC-B67).